A 305-amino-acid polypeptide reads, in one-letter code: Coenzyme PQQ synthesis protein B (305 aa).

It belongs to the PqqB family.

The protein operates within cofactor biosynthesis; pyrroloquinoline quinone biosynthesis. In terms of biological role, may be involved in the transport of PQQ or its precursor to the periplasm. This is Coenzyme PQQ synthesis protein B from Cupriavidus taiwanensis (strain DSM 17343 / BCRC 17206 / CCUG 44338 / CIP 107171 / LMG 19424 / R1) (Ralstonia taiwanensis (strain LMG 19424)).